The chain runs to 385 residues: Anhydro-N-acetylmuramic acid kinase (385 aa).

Position 12–19 (12–19 (GTSLDGID)) interacts with ATP.

The protein belongs to the anhydro-N-acetylmuramic acid kinase family.

It catalyses the reaction 1,6-anhydro-N-acetyl-beta-muramate + ATP + H2O = N-acetyl-D-muramate 6-phosphate + ADP + H(+). It participates in amino-sugar metabolism; 1,6-anhydro-N-acetylmuramate degradation. Its pathway is cell wall biogenesis; peptidoglycan recycling. Catalyzes the specific phosphorylation of 1,6-anhydro-N-acetylmuramic acid (anhMurNAc) with the simultaneous cleavage of the 1,6-anhydro ring, generating MurNAc-6-P. Is required for the utilization of anhMurNAc either imported from the medium or derived from its own cell wall murein, and thus plays a role in cell wall recycling. The chain is Anhydro-N-acetylmuramic acid kinase from Bacillus thuringiensis (strain Al Hakam).